The chain runs to 394 residues: RNA-binding motif protein, X-linked-like-2 (394 aa).

An RRM domain is found at 8 to 86 (GKLFIGGLNL…KAIKVAQATK (79 aa)). Residues 67 to 78 (RDMNGKSLDGKA) show a composition bias toward basic and acidic residues. The segment at 67–394 (RDMNGKSLDG…MERGGGRSRY (328 aa)) is disordered. Residues 150–165 (RGPPPPPRRAGPPPKR) are compositionally biased toward pro residues. Composition is skewed to basic and acidic residues over residues 196–231 (PRRE…REPR) and 239–285 (EYTH…REPF). Residues 321–333 (YSGGRDSYSSSYG) show a composition bias toward low complexity. Basic and acidic residues-rich tracts occupy residues 334-350 (RSDR…RPDR) and 383-394 (GRMERGGGRSRY).

The protein localises to the nucleus. In Macaca fascicularis (Crab-eating macaque), this protein is RNA-binding motif protein, X-linked-like-2 (RBMXL2).